Reading from the N-terminus, the 103-residue chain is L-rhamnose mutarotase (103 aa).

Residue tyrosine 18 participates in substrate binding. Histidine 22 acts as the Proton donor in catalysis. Residues tyrosine 41 and 76–77 (WW) each bind substrate.

This sequence belongs to the rhamnose mutarotase family. In terms of assembly, homodimer.

It localises to the cytoplasm. It carries out the reaction alpha-L-rhamnose = beta-L-rhamnose. The protein operates within carbohydrate metabolism; L-rhamnose metabolism. Functionally, involved in the anomeric conversion of L-rhamnose. This is L-rhamnose mutarotase from Enterococcus faecalis (strain ATCC 700802 / V583).